The primary structure comprises 249 residues: Transcription initiation factor TFIID subunit 9B (249 aa).

N-acetylmethionine is present on M1. The residue at position 147 (S147) is a Phosphoserine. Positions 148 to 171 are disordered; the sequence is AVSSRPTTPPVAPPQAVSGPNKAA. Phosphothreonine is present on T172. At S175 the chain carries Phosphoserine. Residues 224–234 show a composition bias toward polar residues; the sequence is VSSQNTATDSN. The disordered stretch occupies residues 224–249; the sequence is VSSQNTATDSNPLKRKHDDDDDNDTM.

This sequence belongs to the TAF9 family. In terms of assembly, binds TAF5 and TAF6. Component of TFIID and the TATA-binding protein-free TAF complex (TFTC). TFIID is composed of TATA binding protein (TBP) and a number of TBP-associated factors (TAFs). Binds N-terminal domain of p53/TP53 which is essential for transcription.

Its subcellular location is the nucleus. Essential for cell viability. TAF9 and TAF9B are involved in transcriptional activation as well as repression of distinct but overlapping sets of genes. May have a role in gene regulation associated with apoptosis. TAFs are components of the transcription factor IID (TFIID) complex, the TBP-free TAFII complex (TFTC), the PCAF histone acetylase complex and the STAGA transcription coactivator-HAT complex. TFIID or TFTC are essential for the regulation of RNA polymerase II-mediated transcription. This Mus musculus (Mouse) protein is Transcription initiation factor TFIID subunit 9B (Taf9b).